Reading from the N-terminus, the 347-residue chain is Tetraacyldisaccharide 4'-kinase (347 aa).

54-61 is a binding site for ATP; sequence TVGGAGKT.

The protein belongs to the LpxK family.

The enzyme catalyses a lipid A disaccharide + ATP = a lipid IVA + ADP + H(+). Its pathway is glycolipid biosynthesis; lipid IV(A) biosynthesis; lipid IV(A) from (3R)-3-hydroxytetradecanoyl-[acyl-carrier-protein] and UDP-N-acetyl-alpha-D-glucosamine: step 6/6. In terms of biological role, transfers the gamma-phosphate of ATP to the 4'-position of a tetraacyldisaccharide 1-phosphate intermediate (termed DS-1-P) to form tetraacyldisaccharide 1,4'-bis-phosphate (lipid IVA). In Rhizobium etli (strain CIAT 652), this protein is Tetraacyldisaccharide 4'-kinase.